A 129-amino-acid chain; its full sequence is Photosystem II reaction center Psb28 protein (129 aa).

The segment at 110–129 (GLGYSNNSGNNEGADEASEG) is disordered.

It belongs to the Psb28 family. Part of the photosystem II complex.

The protein resides in the cellular thylakoid membrane. The sequence is that of Photosystem II reaction center Psb28 protein from Synechococcus sp. (strain WH7803).